Here is a 271-residue protein sequence, read N- to C-terminus: 3-methyl-2-oxobutanoate hydroxymethyltransferase (271 aa).

Positions 53 and 92 each coordinate Mg(2+). 3-methyl-2-oxobutanoate is bound by residues 53–54 (DS), aspartate 92, and lysine 120. Residue glutamate 122 coordinates Mg(2+). The active-site Proton acceptor is the glutamate 189.

The protein belongs to the PanB family. As to quaternary structure, homodecamer; pentamer of dimers. It depends on Mg(2+) as a cofactor.

The protein resides in the cytoplasm. The catalysed reaction is 3-methyl-2-oxobutanoate + (6R)-5,10-methylene-5,6,7,8-tetrahydrofolate + H2O = 2-dehydropantoate + (6S)-5,6,7,8-tetrahydrofolate. The protein operates within cofactor biosynthesis; (R)-pantothenate biosynthesis; (R)-pantoate from 3-methyl-2-oxobutanoate: step 1/2. Its function is as follows. Catalyzes the reversible reaction in which hydroxymethyl group from 5,10-methylenetetrahydrofolate is transferred onto alpha-ketoisovalerate to form ketopantoate. This chain is 3-methyl-2-oxobutanoate hydroxymethyltransferase, found in Paraburkholderia xenovorans (strain LB400).